Reading from the N-terminus, the 337-residue chain is DNA-directed RNA polymerase subunit alpha (337 aa).

The segment at 1–233 (MIQKNWQELI…DQLSVFVNFK (233 aa)) is alpha N-terminal domain (alpha-NTD). The tract at residues 249-337 (FNPALLKKVD…DLAKHYEDQY (89 aa)) is alpha C-terminal domain (alpha-CTD).

The protein belongs to the RNA polymerase alpha chain family. In terms of assembly, homodimer. The RNAP catalytic core consists of 2 alpha, 1 beta, 1 beta' and 1 omega subunit. When a sigma factor is associated with the core the holoenzyme is formed, which can initiate transcription.

It catalyses the reaction RNA(n) + a ribonucleoside 5'-triphosphate = RNA(n+1) + diphosphate. Its function is as follows. DNA-dependent RNA polymerase catalyzes the transcription of DNA into RNA using the four ribonucleoside triphosphates as substrates. The chain is DNA-directed RNA polymerase subunit alpha from Bartonella bacilliformis (strain ATCC 35685 / KC583 / Herrer 020/F12,63).